A 183-amino-acid polypeptide reads, in one-letter code: Phospholipase A2 inhibitor gamma subunit A1 (183 aa).

8 disulfides stabilise this stretch: Cys-3/Cys-28, Cys-6/Cys-13, Cys-21/Cys-49, Cys-55/Cys-76, Cys-77/Cys-82, Cys-100/Cys-125, Cys-118/Cys-147, and Cys-151/Cys-173. Residue Asn-158 is glycosylated (N-linked (GlcNAc...) asparagine).

Belongs to the CNF-like-inhibitor family. As to quaternary structure, heterodimer of subunit A and subunit B. In terms of tissue distribution, expressed by the liver.

Its subcellular location is the secreted. Phospholipase A2 (PA2) inhibitor. Inhibits the enzymatic activity of PA2 of Deinagkistrodon acutus. Also shows a wide anti-hemorrhage activities to D.acutus, Naja atra and Agkistrodon halys venom. The native protein is more potent than the recombinant one. This is Phospholipase A2 inhibitor gamma subunit A1 from Trimerodytes annularis (Red-bellied annulate keelback).